Consider the following 405-residue polypeptide: Tryptophan synthase beta chain (405 aa).

Lysine 98 carries the post-translational modification N6-(pyridoxal phosphate)lysine.

Belongs to the TrpB family. Tetramer of two alpha and two beta chains. Pyridoxal 5'-phosphate serves as cofactor.

The catalysed reaction is (1S,2R)-1-C-(indol-3-yl)glycerol 3-phosphate + L-serine = D-glyceraldehyde 3-phosphate + L-tryptophan + H2O. It participates in amino-acid biosynthesis; L-tryptophan biosynthesis; L-tryptophan from chorismate: step 5/5. Its function is as follows. The beta subunit is responsible for the synthesis of L-tryptophan from indole and L-serine. This Stenotrophomonas maltophilia (strain R551-3) protein is Tryptophan synthase beta chain.